Reading from the N-terminus, the 64-residue chain is Large ribosomal subunit protein bL28 (64 aa).

The interval 1–21 (MAKKDQLTLRGPLYGNNRSHS) is disordered.

Belongs to the bacterial ribosomal protein bL28 family.

This Mycoplasma genitalium (strain ATCC 33530 / DSM 19775 / NCTC 10195 / G37) (Mycoplasmoides genitalium) protein is Large ribosomal subunit protein bL28.